A 375-amino-acid chain; its full sequence is Histidine biosynthesis bifunctional protein HisB (375 aa).

Positions 1–168 (MTPIVFIDRD…GIAHTLADAP (168 aa)) are histidinol-phosphatase. Asp8 acts as the Nucleophile in catalysis. Mg(2+) contacts are provided by Asp8, Asp10, and Asp128. The active-site Proton donor is the Asp10. Residues 169–375 (RRAVVQRHTK…HVLPSTKGAL (207 aa)) form an imidazoleglycerol-phosphate dehydratase region.

It in the N-terminal section; belongs to the histidinol-phosphatase family. This sequence in the C-terminal section; belongs to the imidazoleglycerol-phosphate dehydratase family. It depends on Mg(2+) as a cofactor.

It localises to the cytoplasm. The enzyme catalyses D-erythro-1-(imidazol-4-yl)glycerol 3-phosphate = 3-(imidazol-4-yl)-2-oxopropyl phosphate + H2O. It carries out the reaction L-histidinol phosphate + H2O = L-histidinol + phosphate. It participates in amino-acid biosynthesis; L-histidine biosynthesis; L-histidine from 5-phospho-alpha-D-ribose 1-diphosphate: step 6/9. Its pathway is amino-acid biosynthesis; L-histidine biosynthesis; L-histidine from 5-phospho-alpha-D-ribose 1-diphosphate: step 8/9. The chain is Histidine biosynthesis bifunctional protein HisB from Xylella fastidiosa (strain 9a5c).